The primary structure comprises 492 residues: ATP synthase subunit beta, chloroplastic (492 aa).

170–177 lines the ATP pocket; that stretch reads GGAGVGKT.

Belongs to the ATPase alpha/beta chains family. In terms of assembly, F-type ATPases have 2 components, CF(1) - the catalytic core - and CF(0) - the membrane proton channel. CF(1) has five subunits: alpha(3), beta(3), gamma(1), delta(1), epsilon(1). CF(0) has four main subunits: a(1), b(1), b'(1) and c(9-12).

It localises to the plastid. It is found in the chloroplast thylakoid membrane. It carries out the reaction ATP + H2O + 4 H(+)(in) = ADP + phosphate + 5 H(+)(out). Its function is as follows. Produces ATP from ADP in the presence of a proton gradient across the membrane. The catalytic sites are hosted primarily by the beta subunits. The protein is ATP synthase subunit beta, chloroplastic of Huperzia lucidula (Shining clubmoss).